Consider the following 780-residue polypeptide: MTHEEHHAAKSLGVGKAIAVLTSGGDAQGMNAAVRAVVRVGIYTGARVFFVHEGYQGLVDGGDNIREATWESVSMMLQLGGTVIGSARCKDFREREGRLRAAHNLVKRGITNLCVIGGDGSLTGADTFRSEWGDLLNDLQKAGKITAEEANKSSYLNIVGLVGSIDNDFCGTDMTIGTDSALHRIIEIVDAITTTAQSHQRTFVLEVMGRHCGYLALVTSLSCGADWVFIPECPPDDAWEEHLCRRLSETRTRGSRLNIIIVAEGAIDKNGQLITSENIKDLVVKRLGYDTRVTVLGHVQRGGTPSAFDRILGSRMGVEAVMALLEGTPDTPACVVSLSGNQAVRLPLMECVQVTKDVTKAMNEKRFDEAMKLRGRSFMNNWEVYKLLAHVRPPVTKSGSYTVAVMNVGAPTAGMNAAVRSTVRIGLIQGNRVLVVHDGFEGLAKGQIEEAGWSYVGGWTGQGGSKLGTKRTLPKKSFEQISANITKFNIQGLVIIGGFEAYTGGLELMEGRKQYDELCIPFVVIPATVSNNVPGSDFSVGADTALNTICMTCDRIKQSAAGTKRRVFIIETMGGYCGYLATMAGLAAGADAAYIFEEPFTIRDLQVNVEHLVQKMKTTVKRGLVLRNEKCNENYTTDFIFNLYSEEGKGIFDSRKNVLGHMQQGGSPTPLDRNFATKMGAKAMNWMSGKIKESYRNGRIFANTPDSGCVLGMRKRALVFQPVTELKEQTDFEHRIPKEQWWLKLRPILKILAKYEIDLDTSEHAHLEHITRKRSGEATI.

Thr-2 bears the N-acetylthreonine mark. Residues 2-390 form an N-terminal catalytic PFK domain 1 region; that stretch reads THEEHHAAKS…NWEVYKLLAH (389 aa). ATP is bound by residues Gly-25, 88–89, and 118–121; these read RC and GDGS. Asp-119 serves as a coordination point for Mg(2+). Residues 164-166, Arg-201, 208-210, Glu-264, Arg-292, and 298-301 contribute to the substrate site; these read SID, MGR, and HVQR. Residue Asp-166 is the Proton acceptor of the active site. Ser-377 is modified (phosphoserine). The interval 391–401 is interdomain linker; the sequence is VRPPVTKSGSY. Positions 402 to 780 are C-terminal regulatory PFK domain 2; that stretch reads TVAVMNVGAP…TRKRSGEATI (379 aa). Residues Arg-471 and 528-532 each bind beta-D-fructose 2,6-bisphosphate; that span reads TVSNN. O-linked (GlcNAc) serine glycosylation is present at Ser-530. At Lys-557 the chain carries N6-(2-hydroxyisobutyryl)lysine. Beta-D-fructose 2,6-bisphosphate contacts are provided by residues Arg-566, 573-575, Glu-629, Arg-655, and 661-664; these read MGG and HMQQ. Residue Ser-667 is modified to Phosphoserine. Residue Arg-735 coordinates beta-D-fructose 2,6-bisphosphate. Residue Ser-775 is modified to Phosphoserine.

This sequence belongs to the phosphofructokinase type A (PFKA) family. ATP-dependent PFK group I subfamily. Eukaryotic two domain clade 'E' sub-subfamily. In terms of assembly, homo- and heterotetramers. Phosphofructokinase (PFK) enzyme functions as a tetramer composed of different combinations of 3 types of subunits, called PFKM (M), PFKL (L) and PFKP (P). The composition of the PFK tetramer differs according to the tissue type it is present in. The kinetic and regulatory properties of the tetrameric enzyme are dependent on the subunit composition, hence can vary across tissues. Interacts (via C-terminus) with HK1 (via N-terminal spermatogenic cell-specific region). Requires Mg(2+) as cofactor. Post-translationally, glcNAcylation decreases enzyme activity.

The protein localises to the cytoplasm. It carries out the reaction beta-D-fructose 6-phosphate + ATP = beta-D-fructose 1,6-bisphosphate + ADP + H(+). The protein operates within carbohydrate degradation; glycolysis; D-glyceraldehyde 3-phosphate and glycerone phosphate from D-glucose: step 3/4. With respect to regulation, allosterically activated by ADP, AMP, or fructose 2,6-bisphosphate, and allosterically inhibited by ATP or citrate. Catalyzes the phosphorylation of D-fructose 6-phosphate to fructose 1,6-bisphosphate by ATP, the first committing step of glycolysis. The sequence is that of ATP-dependent 6-phosphofructokinase, muscle type (PFKM) from Sus scrofa (Pig).